A 186-amino-acid chain; its full sequence is Elongation factor P (186 aa).

The protein belongs to the elongation factor P family.

It localises to the cytoplasm. It functions in the pathway protein biosynthesis; polypeptide chain elongation. In terms of biological role, involved in peptide bond synthesis. Stimulates efficient translation and peptide-bond synthesis on native or reconstituted 70S ribosomes in vitro. Probably functions indirectly by altering the affinity of the ribosome for aminoacyl-tRNA, thus increasing their reactivity as acceptors for peptidyl transferase. The chain is Elongation factor P from Synechococcus sp. (strain RCC307).